The sequence spans 484 residues: ATP synthase subunit beta (484 aa).

162–169 contacts ATP; it reads GGAGVGKT.

Belongs to the ATPase alpha/beta chains family. As to quaternary structure, F-type ATPases have 2 components, CF(1) - the catalytic core - and CF(0) - the membrane proton channel. CF(1) has five subunits: alpha(3), beta(3), gamma(1), delta(1), epsilon(1). CF(0) has four main subunits: a(1), b(1), b'(1) and c(9-12).

Its subcellular location is the cellular thylakoid membrane. The catalysed reaction is ATP + H2O + 4 H(+)(in) = ADP + phosphate + 5 H(+)(out). Produces ATP from ADP in the presence of a proton gradient across the membrane. The catalytic sites are hosted primarily by the beta subunits. In Trichodesmium erythraeum (strain IMS101), this protein is ATP synthase subunit beta.